The sequence spans 115 residues: Large ribosomal subunit protein uL22 (115 aa).

The protein belongs to the universal ribosomal protein uL22 family. As to quaternary structure, part of the 50S ribosomal subunit.

Its function is as follows. This protein binds specifically to 23S rRNA; its binding is stimulated by other ribosomal proteins, e.g. L4, L17, and L20. It is important during the early stages of 50S assembly. It makes multiple contacts with different domains of the 23S rRNA in the assembled 50S subunit and ribosome. Functionally, the globular domain of the protein is located near the polypeptide exit tunnel on the outside of the subunit, while an extended beta-hairpin is found that lines the wall of the exit tunnel in the center of the 70S ribosome. This Nitrosospira multiformis (strain ATCC 25196 / NCIMB 11849 / C 71) protein is Large ribosomal subunit protein uL22.